Reading from the N-terminus, the 309-residue chain is Probable MRF1 mitochondrial N(5)-glutamine methyltransferase mtq1 (309 aa).

Residues 124-128 (CTGSG), Asp148, and Asn200 each bind S-adenosyl-L-methionine. 200-203 (NPPY) provides a ligand contact to substrate.

Belongs to the protein N5-glutamine methyltransferase family.

It is found in the mitochondrion. The enzyme catalyses L-glutaminyl-[peptide chain release factor] + S-adenosyl-L-methionine = N(5)-methyl-L-glutaminyl-[peptide chain release factor] + S-adenosyl-L-homocysteine + H(+). Methylates MRF1 on 'Gln-270' using S-adenosyl L-methionine as methyl donor. The sequence is that of Probable MRF1 mitochondrial N(5)-glutamine methyltransferase mtq1 (mtq1) from Schizosaccharomyces pombe (strain 972 / ATCC 24843) (Fission yeast).